A 545-amino-acid chain; its full sequence is High-molecular-weight cytochrome c (545 aa).

Positions 1–31 (MRNGRTLLRWAGVLAATAIIGVGGFWSQGTT) are cleaved as a signal peptide. Heme c-binding residues include His66, His69, Cys80, Cys83, His84, His111, Cys114, Cys117, His118, Cys135, Cys138, His139, His159, His162, Cys178, Cys181, His182, His183, Cys202, Cys205, His206, His222, Cys225, Cys228, His229, Cys244, Cys247, His248, His298, His301, Cys308, Cys311, His312, His313, Cys319, Cys322, His323, His341, Cys349, Cys352, His353, Cys362, Cys365, His366, Cys378, Cys381, His382, His449, His470, Cys477, Cys480, His481, His482, Cys493, Cys496, His497, His516, Cys519, Cys522, His523, Cys536, Cys539, and His540.

In terms of assembly, monomer. Post-translationally, binds 16 heme c groups per subunit. High-spin heme 15 has single axial histidine ligand and the other hemes are low-spin bis-histidinyl coordinated.

Its subcellular location is the periplasm. In terms of biological role, HMWC (high-molecular-weight cytochrome c), ORF2, ORF3, ORF4, ORF5 and ORF6 in the HMC operon form a transmembrane protein complex that allows electron flow from the periplasmic hydrogenase to the cytoplasmic enzymes that catalyze reduction of sulfates. In Nitratidesulfovibrio vulgaris (strain ATCC 29579 / DSM 644 / CCUG 34227 / NCIMB 8303 / VKM B-1760 / Hildenborough) (Desulfovibrio vulgaris), this protein is High-molecular-weight cytochrome c (hmcA).